Consider the following 216-residue polypeptide: Ras-related protein Rab-5C (216 aa).

GTP contacts are provided by Ser-30, Ala-31, Gly-33, Lys-34, Ser-35, Ser-36, His-47, Glu-48, Thr-53, Gly-79, Asn-134, Lys-135, Asp-137, Ala-165, and Lys-166. Ser-35 contributes to the Mg(2+) binding site. Short sequence motifs (switch) lie at residues 45–57 (QFHE…IGAA) and 78–94 (AGQE…YRGA). A Mg(2+)-binding site is contributed by Thr-53. The segment at 184–216 (KNEPQNAPGGPGRNRVVDLQESSQPSRSQCCSN) is disordered. A compositionally biased stretch (polar residues) spans 203–216 (QESSQPSRSQCCSN). S-geranylgeranyl cysteine attachment occurs at residues Cys-213 and Cys-214.

Belongs to the small GTPase superfamily. Rab family. Mg(2+) serves as cofactor. Detected in brain, ovary, rectum, small intestine, large intestine, liver, spleen, follicle and kidney (at protein level).

Its subcellular location is the cell membrane. The protein resides in the early endosome membrane. It carries out the reaction GTP + H2O = GDP + phosphate + H(+). Its activity is regulated as follows. Regulated by guanine nucleotide exchange factors (GEFs) which promote the exchange of bound GDP for free GTP. Regulated by GTPase activating proteins (GAPs) which increase the GTP hydrolysis activity. Inhibited by GDP dissociation inhibitors (GDIs). In terms of biological role, the small GTPases Rab are key regulators of intracellular membrane trafficking, from the formation of transport vesicles to their fusion with membranes. Rabs cycle between an inactive GDP-bound form and an active GTP-bound form that is able to recruit to membranes different sets of downstream effectors directly responsible for vesicle formation, movement, tethering and fusion. This is Ras-related protein Rab-5C (RAB5C) from Gallus gallus (Chicken).